The chain runs to 285 residues: Glycine--tRNA ligase alpha subunit (285 aa).

Belongs to the class-II aminoacyl-tRNA synthetase family. As to quaternary structure, tetramer of two alpha and two beta subunits.

It is found in the cytoplasm. It carries out the reaction tRNA(Gly) + glycine + ATP = glycyl-tRNA(Gly) + AMP + diphosphate. The chain is Glycine--tRNA ligase alpha subunit from Granulibacter bethesdensis (strain ATCC BAA-1260 / CGDNIH1).